A 92-amino-acid polypeptide reads, in one-letter code: Isoleucine--tRNA ligase (92 aa).

Residues C55, C58, C75, and C78 each contribute to the Zn(2+) site.

The protein belongs to the class-I aminoacyl-tRNA synthetase family. IleS type 1 subfamily. As to quaternary structure, monomer. Zn(2+) is required as a cofactor.

It is found in the cytoplasm. It catalyses the reaction tRNA(Ile) + L-isoleucine + ATP = L-isoleucyl-tRNA(Ile) + AMP + diphosphate. In terms of biological role, catalyzes the attachment of isoleucine to tRNA(Ile). As IleRS can inadvertently accommodate and process structurally similar amino acids such as valine, to avoid such errors it has two additional distinct tRNA(Ile)-dependent editing activities. One activity is designated as 'pretransfer' editing and involves the hydrolysis of activated Val-AMP. The other activity is designated 'posttransfer' editing and involves deacylation of mischarged Val-tRNA(Ile). The polypeptide is Isoleucine--tRNA ligase (ileS) (Klebsiella aerogenes (Enterobacter aerogenes)).